The following is a 577-amino-acid chain: Protein downstream neighbor of son homolog (577 aa).

Disordered stretches follow at residues 1 to 67 (MAEL…KRRN) and 328 to 382 (FTQP…LEEM). The span at 362-375 (ETDEVSDESDEDES) shows a compositional bias: acidic residues.

The protein belongs to the DONSON family. As to quaternary structure, component of the replisome complex.

It is found in the nucleus. Replisome component that maintains genome stability by protecting stalled or damaged replication forks. After the induction of replication stress, required for the stabilization of stalled replication forks, the efficient activation of the intra-S-phase and G/2M cell-cycle checkpoints and the maintenance of genome stability. This Xenopus tropicalis (Western clawed frog) protein is Protein downstream neighbor of son homolog.